We begin with the raw amino-acid sequence, 287 residues long: 4-diphosphocytidyl-2-C-methyl-D-erythritol kinase (287 aa).

Lys-10 is an active-site residue. 92–102 (PLAAGLAGGSA) contributes to the ATP binding site. Residue Asp-134 is part of the active site.

It belongs to the GHMP kinase family. IspE subfamily.

It catalyses the reaction 4-CDP-2-C-methyl-D-erythritol + ATP = 4-CDP-2-C-methyl-D-erythritol 2-phosphate + ADP + H(+). It functions in the pathway isoprenoid biosynthesis; isopentenyl diphosphate biosynthesis via DXP pathway; isopentenyl diphosphate from 1-deoxy-D-xylulose 5-phosphate: step 3/6. Catalyzes the phosphorylation of the position 2 hydroxy group of 4-diphosphocytidyl-2C-methyl-D-erythritol. In Caldanaerobacter subterraneus subsp. tengcongensis (strain DSM 15242 / JCM 11007 / NBRC 100824 / MB4) (Thermoanaerobacter tengcongensis), this protein is 4-diphosphocytidyl-2-C-methyl-D-erythritol kinase.